A 299-amino-acid chain; its full sequence is Protease HtpX homolog (299 aa).

A run of 2 helical transmembrane segments spans residues 14–34 (WLLLLVFFLLLGLVGYGVGYL) and 39–59 (GFGGMILALVIGFIYAVTMIF). Histidine 143 contributes to the Zn(2+) binding site. The active site involves glutamate 144. Position 147 (histidine 147) interacts with Zn(2+). 2 consecutive transmembrane segments (helical) span residues 153 to 173 (IRISTIAVALASAITMLAVMA) and 198 to 218 (IILLIISLIAIILAPLAATLV). A Zn(2+)-binding site is contributed by glutamate 227.

It belongs to the peptidase M48B family. Requires Zn(2+) as cofactor.

The protein resides in the cell membrane. The polypeptide is Protease HtpX homolog (Streptococcus thermophilus (strain CNRZ 1066)).